The sequence spans 402 residues: Multidrug resistance protein MdtH (402 aa).

Helical transmembrane passes span 13–33, 34–54, 99–116, 139–159, 165–185, 214–234, 243–263, 277–297, 300–320, 340–360, and 368–388; these read YFLL…FPLI, SIRF…ALGL, PWLL…GTLF, LLMM…SWLL, LVCA…AWLL, VLTL…LPIM, AAVK…LYPI, LMAG…VSSV, LFVL…ARET, LGLA…FDSG, and LPWV…WWQF.

The protein belongs to the major facilitator superfamily. DHA1 family. MdtH (TC 2.A.1.2.21) subfamily.

It is found in the cell inner membrane. This Enterobacter sp. (strain 638) protein is Multidrug resistance protein MdtH.